The primary structure comprises 624 residues: UvrABC system protein C (624 aa).

The region spanning leucine 27–isoleucine 105 is the GIY-YIG domain. The 36-residue stretch at arginine 215 to isoleucine 250 folds into the UVR domain.

It belongs to the UvrC family. As to quaternary structure, interacts with UvrB in an incision complex.

The protein localises to the cytoplasm. Functionally, the UvrABC repair system catalyzes the recognition and processing of DNA lesions. UvrC both incises the 5' and 3' sides of the lesion. The N-terminal half is responsible for the 3' incision and the C-terminal half is responsible for the 5' incision. This is UvrABC system protein C from Paramagnetospirillum magneticum (strain ATCC 700264 / AMB-1) (Magnetospirillum magneticum).